The sequence spans 260 residues: Spectinomycin 9-adenylyltransferase (260 aa).

It catalyses the reaction spectinomycin + ATP = 9-O-adenylylspectinomycin + diphosphate. In terms of biological role, mediates bacterial resistance to the antibiotic spectinomycin but not streptomycin. This Staphylococcus aureus (strain Mu50 / ATCC 700699) protein is Spectinomycin 9-adenylyltransferase (ant1).